A 289-amino-acid chain; its full sequence is UPF0276 protein BP2925 (289 aa).

Belongs to the UPF0276 family.

In Bordetella pertussis (strain Tohama I / ATCC BAA-589 / NCTC 13251), this protein is UPF0276 protein BP2925.